The following is a 325-amino-acid chain: H-2 class I histocompatibility antigen, Q10 alpha chain (325 aa).

A signal peptide spans 1–24 (MGAMAPRTLLLLLAAALAPTQTQA). An alpha-1 region spans residues 25 to 114 (GSHSMRYFET…LLGYYNQSES (90 aa)). Residues 25–310 (GSHSMRYFET…PPSTDSIMSH (286 aa)) are Extracellular-facing. An N-linked (GlcNAc...) asparagine glycan is attached at Asn-110. An alpha-2 region spans residues 115-206 (GSHTIQWMYG…ELGKETLLRT (92 aa)). Disulfide bonds link Cys-125-Cys-188 and Cys-227-Cys-283. The tract at residues 207-298 (DPPKTHVTHH…GLPEPLTLRW (92 aa)) is alpha-3. The Ig-like C1-type domain maps to 209 to 297 (PKTHVTHHPG…EGLPEPLTLR (89 aa)). A glycan (N-linked (GlcNAc...) asparagine) is linked at Asn-280. Residues 299–310 (EPPPSTDSIMSH) are connecting peptide. Residues 311-324 (IADLLWPSLKLWWY) traverse the membrane as a helical segment.

It belongs to the MHC class I family. As to quaternary structure, heterodimer of an alpha chain and a beta chain (beta-2-microglobulin).

Its subcellular location is the membrane. Involved in the presentation of foreign antigens to the immune system. This is H-2 class I histocompatibility antigen, Q10 alpha chain (H2-Q10) from Mus musculus (Mouse).